A 482-amino-acid polypeptide reads, in one-letter code: tRNA sulfurtransferase (482 aa).

The THUMP domain occupies 61 to 165 (QQVLEILTTT…DDKLNQILAH (105 aa)). ATP-binding positions include 183–184 (LI), lysine 265, glycine 287, and glutamine 296. The cysteines at positions 344 and 456 are disulfide-linked. Residues 404-482 (IEEHAVVLDI…GFNNVKVYRP (79 aa)) enclose the Rhodanese domain. Catalysis depends on cysteine 456, which acts as the Cysteine persulfide intermediate.

The protein belongs to the ThiI family.

The protein resides in the cytoplasm. It carries out the reaction [ThiI sulfur-carrier protein]-S-sulfanyl-L-cysteine + a uridine in tRNA + 2 reduced [2Fe-2S]-[ferredoxin] + ATP + H(+) = [ThiI sulfur-carrier protein]-L-cysteine + a 4-thiouridine in tRNA + 2 oxidized [2Fe-2S]-[ferredoxin] + AMP + diphosphate. The enzyme catalyses [ThiS sulfur-carrier protein]-C-terminal Gly-Gly-AMP + S-sulfanyl-L-cysteinyl-[cysteine desulfurase] + AH2 = [ThiS sulfur-carrier protein]-C-terminal-Gly-aminoethanethioate + L-cysteinyl-[cysteine desulfurase] + A + AMP + 2 H(+). It participates in cofactor biosynthesis; thiamine diphosphate biosynthesis. Its function is as follows. Catalyzes the ATP-dependent transfer of a sulfur to tRNA to produce 4-thiouridine in position 8 of tRNAs, which functions as a near-UV photosensor. Also catalyzes the transfer of sulfur to the sulfur carrier protein ThiS, forming ThiS-thiocarboxylate. This is a step in the synthesis of thiazole, in the thiamine biosynthesis pathway. The sulfur is donated as persulfide by IscS. This is tRNA sulfurtransferase from Vibrio vulnificus (strain CMCP6).